The primary structure comprises 711 residues: C6 finger domain transcription factor nscR (711 aa).

Positions 17-43 (CELCRERKVKCDKLDPCTNCSSAGVIC) form a DNA-binding region, zn(2)-C6 fungal-type. Positions 372 to 394 (SPPKHINDSDFDPTTSHDVPDRE) are disordered.

The protein resides in the nucleus. In terms of biological role, transcription factor that specifically regulates the neosartoricin B biosynthesis gene cluster. The polypeptide is C6 finger domain transcription factor nscR (Trichophyton tonsurans (strain CBS 112818) (Scalp ringworm fungus)).